A 100-amino-acid chain; its full sequence is Urease subunit gamma (100 aa).

The protein belongs to the urease gamma subunit family. Heterotrimer of UreA (gamma), UreB (beta) and UreC (alpha) subunits. Three heterotrimers associate to form the active enzyme.

It is found in the cytoplasm. The enzyme catalyses urea + 2 H2O + H(+) = hydrogencarbonate + 2 NH4(+). Its pathway is nitrogen metabolism; urea degradation; CO(2) and NH(3) from urea (urease route): step 1/1. The chain is Urease subunit gamma from Blochmanniella pennsylvanica (strain BPEN).